Here is a 489-residue protein sequence, read N- to C-terminus: MRVAIVGAGLAGMATAVELVDAGHEVELYEARSFIGGKVGSWVDGDGNHIEMGLHVFFGCYYNLFNLMEKVGAKQNLRLKEHTHTFVNQGGRIGELDFRFLTGAPFNGLKAFFTTSQLDTKDKIANSIALATSPIVRGLVDFDGAMKTIRDLDRISFAEWFLSKGGNEGSLKKMWDPIAYALGFIDTENISARCMLTIFQLFAARTEASVLRMLEGSPQEYLHKPIQEYLEQRGTKFYTRHKVKEIKTKVTDGETRVTGLIINDGVETKTVTADAYVAACDVPGIKNLLPENWRTQWDFFNKIYYLDTVPVATVQLRFDGWVTEMNDPAKRKQLEQAFGLDNLLYTSDAEFSCFADLALTSPADYYRPGEGSLLQLVLTPGDPFMKESNEAIAYRVLKQVKALFPSAADLNMTWYSVIKLAQSLYREAPGMDLFRPSQATPIANFFLAGSYTQQDYIDSMEGATLSGRQAAQAILANQARLQTAVLASQ.

This sequence belongs to the zeta carotene desaturase family. Requires NAD(+) as cofactor. It depends on NADP(+) as a cofactor. FAD serves as cofactor.

The enzyme catalyses 9,9'-di-cis-zeta-carotene + 2 a quinone = 7,7',9,9'-tetra-cis-lycopene + 2 a quinol. It participates in carotenoid biosynthesis; lycopene biosynthesis. Its function is as follows. Catalyzes the conversion of zeta-carotene to lycopene via the intermediary of neurosporene. It carries out two consecutive desaturations (introduction of double bonds) at positions C-7 and C-7'. This Synechocystis sp. (strain ATCC 27184 / PCC 6803 / Kazusa) protein is Zeta-carotene desaturase (crtQ).